The primary structure comprises 507 residues: Cytochrome c-552 (507 aa).

The first 22 residues, 1 to 22, serve as a signal peptide directing secretion; sequence MTKFKLLLAGSLVAIVSMGLLA. The heme c site is built by H102, C130, C133, K134, C168, C171, H172, C211, C214, and H215. Ca(2+)-binding residues include E217, Y218, K274, and Q276. Y218 serves as a coordination point for substrate. Residue H277 coordinates substrate. Heme c-binding residues include H288, C295, C298, H299, H313, C326, C329, H330, and H405.

The protein belongs to the cytochrome c-552 family. Homodimer. Interacts with NrfH. May form a heterotetramer with NrfH. Ca(2+) is required as a cofactor. Requires heme c as cofactor.

Its subcellular location is the periplasm. It catalyses the reaction 6 Fe(III)-[cytochrome c] + NH4(+) + 2 H2O = 6 Fe(II)-[cytochrome c] + nitrite + 8 H(+). It participates in nitrogen metabolism; nitrate reduction (assimilation). Functionally, catalyzes the reduction of nitrite to ammonia, consuming six electrons in the process. Has very low activity toward hydroxylamine, and even lower activity toward sulfite. Sulfite reductase activity is maximal at neutral pH. This chain is Cytochrome c-552 (nrfA), found in Wolinella succinogenes (strain ATCC 29543 / DSM 1740 / CCUG 13145 / JCM 31913 / LMG 7466 / NCTC 11488 / FDC 602W) (Vibrio succinogenes).